Reading from the N-terminus, the 359-residue chain is DNA replication and repair protein RecF (359 aa).

ATP is bound at residue 30-37; sequence GPNGSGKT.

This sequence belongs to the RecF family.

It localises to the cytoplasm. Its function is as follows. The RecF protein is involved in DNA metabolism; it is required for DNA replication and normal SOS inducibility. RecF binds preferentially to single-stranded, linear DNA. It also seems to bind ATP. This chain is DNA replication and repair protein RecF, found in Vibrio parahaemolyticus serotype O3:K6 (strain RIMD 2210633).